A 335-amino-acid chain; its full sequence is MSIQASPVTILGAGSYGTALAIALSRNGYPTYLWGHNPTACAQMAQERQNARFLPDISFPEALRVESDLKSAVEKSKDLLIVVPSHVFGEVIQQIKPFLHNRHRIIWATKGLERGTGRLLQNLVEQELGSQYPLAVLSGPTFAKELAAGLPTAITLAAENEQFAKEFQARIHCSKHFRVYINNDMVGVQLGGAIKNVIAISAGMSDGMGFGANARTALITRGIAEISRLGVSLGANVNTFMGMSGLGDLVLTCTDNQSRNRRFGMMLGQGVDARTAMDEIGQVVEGYYNTKEAYMLAQKQGIEMPITEQIYQVLFCGKDAKEAATALLGRKSKVE.

NADPH-binding residues include Ser15, Tyr16, His36, and Lys110. Lys110, Gly139, and Thr141 together coordinate sn-glycerol 3-phosphate. Ala143 serves as a coordination point for NADPH. 5 residues coordinate sn-glycerol 3-phosphate: Lys195, Asp248, Ser258, Arg259, and Asn260. Lys195 (proton acceptor) is an active-site residue. Arg259 lines the NADPH pocket. Residues Val283 and Glu285 each coordinate NADPH.

It belongs to the NAD-dependent glycerol-3-phosphate dehydrogenase family.

Its subcellular location is the cytoplasm. The enzyme catalyses sn-glycerol 3-phosphate + NAD(+) = dihydroxyacetone phosphate + NADH + H(+). It catalyses the reaction sn-glycerol 3-phosphate + NADP(+) = dihydroxyacetone phosphate + NADPH + H(+). Its pathway is membrane lipid metabolism; glycerophospholipid metabolism. In terms of biological role, catalyzes the reduction of the glycolytic intermediate dihydroxyacetone phosphate (DHAP) to sn-glycerol 3-phosphate (G3P), the key precursor for phospholipid synthesis. This Mannheimia succiniciproducens (strain KCTC 0769BP / MBEL55E) protein is Glycerol-3-phosphate dehydrogenase [NAD(P)+].